The primary structure comprises 855 residues: Axonemal dynein light chain domain-containing protein 1 (855 aa).

Residues 1-17 (MSLPKTPSTPLNSASTS) show a composition bias toward polar residues. Residues 1-31 (MSLPKTPSTPLNSASTSESKKLVSVATEGTR) form a disordered region. 3 coiled-coil regions span residues 316–402 (QRIL…WSSA), 451–480 (LQKL…RETL), and 571–596 (SERQ…RING).

It is found in the cytoplasm. Its function is as follows. May be essential for spermiogenesis and male fertility probably by regulating the manchette dynamics, spermatid head shaping and sperm flagellum assembly. In Macaca fascicularis (Crab-eating macaque), this protein is Axonemal dynein light chain domain-containing protein 1 (AXDND1).